A 406-amino-acid polypeptide reads, in one-letter code: Kelch domain-containing protein 1 (406 aa).

Kelch repeat units lie at residues 24-76 (FLYV…CGAC), 80-134 (RLYV…VYKD), 135-181 (RLIY…TKTR), 208-258 (KGYV…AITD), 260-307 (KLFL…ACLG), and 311-361 (EIMV…LKSQ).

In terms of assembly, component of a CRL5 E3 ubiquitin-protein ligase complex, also named ECS (Elongin BC-CUL2/5-SOCS-box protein) complex, composed of CUL5, Elongin BC (ELOB and ELOC), RBX1 and substrate-specific adapter KLHDC1.

The protein localises to the cytoplasm. It is found in the cytosol. The protein operates within protein modification; protein ubiquitination. Substrate-recognition component of a Cul5-RING (CRL5) E3 ubiquitin-protein ligase complex of the DesCEND (destruction via C-end degrons) pathway, which recognizes a C-degron located at the extreme C terminus of target proteins, leading to their ubiquitination and degradation. The C-degron recognized by the DesCEND pathway is usually a motif of less than ten residues and can be present in full-length proteins, truncated proteins or proteolytically cleaved forms. The CRL5(KLHDC1) complex mediates ubiquitination and degradation of truncated SELENOS selenoprotein produced by failed UGA/Sec decoding, which ends with a glycine. The polypeptide is Kelch domain-containing protein 1 (Mus musculus (Mouse)).